A 101-amino-acid polypeptide reads, in one-letter code: Small ribosomal subunit protein uS14 (101 aa).

The tract at residues 44 to 74 (ASRKLSRLPRDSSPVRLRNRDQVDGRPRGYV) is disordered. Residues 61 to 70 (RNRDQVDGRP) show a composition bias toward basic and acidic residues.

Belongs to the universal ribosomal protein uS14 family. In terms of assembly, part of the 30S ribosomal subunit. Contacts proteins S3 and S10.

Binds 16S rRNA, required for the assembly of 30S particles and may also be responsible for determining the conformation of the 16S rRNA at the A site. The polypeptide is Small ribosomal subunit protein uS14 (Cutibacterium acnes (strain DSM 16379 / KPA171202) (Propionibacterium acnes)).